Here is a 322-residue protein sequence, read N- to C-terminus: Endochitinase CH25 (322 aa).

The signal sequence occupies residues 1–20 (MKSCLLLFLIFSFLLSFSLA). One can recognise a Chitin-binding type-1 domain in the interval 21–62 (EQCGRQAGGALCPNGLCCSEFGWCGDTEAYCKQPGCQSQCGG). 7 cysteine pairs are disulfide-bonded: Cys23/Cys38, Cys32/Cys44, Cys37/Cys51, Cys56/Cys60, Cys92/Cys154, Cys166/Cys174, and Cys273/Cys305. Catalysis depends on Glu136, which acts as the Proton donor.

It belongs to the glycosyl hydrolase 19 family. Chitinase class I subfamily. In terms of tissue distribution, high expression in roots, moderate in floral tissues and low in stems and leaves.

The enzyme catalyses Random endo-hydrolysis of N-acetyl-beta-D-glucosaminide (1-&gt;4)-beta-linkages in chitin and chitodextrins.. This Brassica napus (Rape) protein is Endochitinase CH25.